We begin with the raw amino-acid sequence, 155 residues long: Transcriptional repressor NrdR (155 aa).

A zinc finger spans residues 3–34 (CPFCGHSNTQVLDTRMSEDGDAVRRRRRCEAC). An ATP-cone domain is found at 49–139 (PAIVKKNGSR…VYRSFEDVSE (91 aa)).

Belongs to the NrdR family. Zn(2+) serves as cofactor.

Negatively regulates transcription of bacterial ribonucleotide reductase nrd genes and operons by binding to NrdR-boxes. The sequence is that of Transcriptional repressor NrdR from Cupriavidus necator (strain ATCC 17699 / DSM 428 / KCTC 22496 / NCIMB 10442 / H16 / Stanier 337) (Ralstonia eutropha).